The following is a 408-amino-acid chain: Serine-rich antigen (408 aa).

Repeat copies occupy residues 209–214 and 230–235. The 2 X 6 AA repeats of S-V-A-Q-S-E stretch occupies residues 209-235; the sequence is SVAQSEEHGSDSMSQSYNTCGSVAQSE.

The protein belongs to the mycobacterial PPE family.

The protein is Serine-rich antigen (sra) of Mycobacterium leprae (strain TN).